A 348-amino-acid chain; its full sequence is Aminotransferase atnJ (348 aa).

Arg79 serves as a coordination point for pyridoxal 5'-phosphate. Position 180 is an N6-(pyridoxal phosphate)lysine (Lys180). Glu216 contributes to the pyridoxal 5'-phosphate binding site.

It belongs to the class-IV pyridoxal-phosphate-dependent aminotransferase family. The cofactor is pyridoxal 5'-phosphate.

The protein operates within secondary metabolite biosynthesis. Its function is as follows. Aminotransferase; part of the gene cluster that mediates the biosynthesis of aspercryptins, linear lipopeptides built from six amino acids including 2 highly unusual and nonproteogenic amino acids, 2-amino-octanoic acid (2aoa) and 2-amino-dodecanol (2adol). The core structure of aspercryptins is as follows: Ser/Ala-Thr-Ile/Val-2aoa-Asn-2adol. The first step of aspercryptin biosynthesis is the generation of the fatty acid precursors, octanoic and dodecanoic acids, by the FAS subunits atnF and atnM. The fatty acid precursors are likely transformed into the corresponding alpha-amino fatty acids in three steps. First, they are hydroxylated by the cytochrome P450 monooxygenase atnE, then oxidized to the corresponding alpha-keto acids by the NAD(P)-dependent oxidoreductase atnD, and finally converted to the alpha-amino fatty acids by the PLP-dependent aminotransferases atnH or atnJ. the alpha-amino fatty acids, 2-amino-octanoic and 2-amino-dodecanoic acids, are recognized, activated, and covalently tethered to the NRPS atnA by its fourth and sixth adenylation domains. The second module of atnA is the Thr module and contains an epimerase (E) domain responsible for the epimerization of Thr to D-allo-Thr. Additionally, despite atnA having only one epimerase domain, the first amino acid of aspercryptin A1 is D-Ser, suggesting that serine is either loaded directly as D-Ser on the first module or that the epimerase domain in the threonine module epimerizes both L-Ser and L-Thr. After condensation of the hexapeptide of aspercryptin, the C-terminal reductase (TE) domain might be involved in the reductive release and production of the aldehyde hexapeptide. Further reduction would generate aspercryptins. The variety of aspercryptins produced reflects the flexibility of the atnA NRPS, allowing incorporation of alanine instead of serine, valine for isoleucine, and a C10 fatty amino alcohol instead of the C12 version. AtnB seems to be involved in the selectivity for Ile versus Val by the third module. Moreover, type B, C and D aspercryptins have an additional N-terminal cichorine, acetyl and propionyl group respectively. The sequence is that of Aminotransferase atnJ from Emericella nidulans (strain FGSC A4 / ATCC 38163 / CBS 112.46 / NRRL 194 / M139) (Aspergillus nidulans).